The sequence spans 507 residues: GMP synthase [glutamine-hydrolyzing] (507 aa).

Positions 9–202 (TILIIDFGSQ…VHRIVGVKPG (194 aa)) constitute a Glutamine amidotransferase type-1 domain. Residue cysteine 86 is the Nucleophile of the active site. Residues histidine 176 and glutamate 178 contribute to the active site. The GMPS ATP-PPase domain maps to 203–395 (WTMGAYREQA…LGLPDSFIGR (193 aa)). 230–236 (SGGVDSS) contacts ATP.

In terms of assembly, homodimer.

The enzyme catalyses XMP + L-glutamine + ATP + H2O = GMP + L-glutamate + AMP + diphosphate + 2 H(+). It functions in the pathway purine metabolism; GMP biosynthesis; GMP from XMP (L-Gln route): step 1/1. Its function is as follows. Catalyzes the synthesis of GMP from XMP. The chain is GMP synthase [glutamine-hydrolyzing] from Brucella melitensis biotype 1 (strain ATCC 23456 / CCUG 17765 / NCTC 10094 / 16M).